The chain runs to 548 residues: Folylpolyglutamate synthase (548 aa).

G130–S133 is a binding site for ATP. Mg(2+)-binding residues include S157, E234, and H262. Positions 382 and 396 each coordinate ATP.

The protein belongs to the folylpolyglutamate synthase family. Requires a monovalent cation as cofactor.

The protein resides in the mitochondrion inner membrane. Its subcellular location is the mitochondrion matrix. The protein localises to the cytoplasm. The enzyme catalyses (6S)-5,6,7,8-tetrahydrofolyl-(gamma-L-Glu)(n) + L-glutamate + ATP = (6S)-5,6,7,8-tetrahydrofolyl-(gamma-L-Glu)(n+1) + ADP + phosphate + H(+). Its pathway is cofactor biosynthesis; tetrahydrofolylpolyglutamate biosynthesis. Catalyzes conversion of folates to polyglutamate derivatives allowing concentration of folate compounds in the cell and the intracellular retention of these cofactors, which are important substrates for most of the folate-dependent enzymes that are involved in one-carbon transfer reactions involved in purine, pyrimidine and amino acid synthesis. Required for methionine synthesis and maintenance of intact mitochondrial DNA. Involved in telomere maintenance. This chain is Folylpolyglutamate synthase, found in Saccharomyces cerevisiae (strain AWRI1631) (Baker's yeast).